We begin with the raw amino-acid sequence, 621 residues long: Protein CASP (621 aa).

Residues 1-574 are Cytoplasmic-facing; sequence MEIVSRAWES…ILATPKSRTV (574 aa). Coiled-coil stretches lie at residues 101–445 and 473–525; these read LLKG…VQDI and ILTS…FLQS. A helical; Anchor for type IV membrane protein transmembrane segment spans residues 575–595; that stretch reads FFSYLLILHALIMLVLYKFAF. Over 596–621 the chain is Lumenal; it reads DQSVVRDAETECEYKFHQHMLDNHKQ.

The protein belongs to the CASP family.

It is found in the golgi apparatus membrane. In terms of biological role, may be involved in intra-Golgi retrograde transport. This chain is Protein CASP (ceh-44), found in Caenorhabditis elegans.